A 254-amino-acid polypeptide reads, in one-letter code: Putative epimerase LsrE (254 aa).

Residues 14-34 form a helical membrane-spanning segment; the sequence is VALLASYPLSVGILAGQWIAL. Positions 50, 52, and 81 each coordinate a divalent metal cation. Catalysis depends on Asp52, which acts as the Proton acceptor. Residues His81, 166–169, 199–201, and 221–222 each bind substrate; these read GYGS, DGS, and GS. Residue Asp199 coordinates a divalent metal cation. The active-site Proton donor is Asp199.

The protein belongs to the ribulose-phosphate 3-epimerase family. A divalent metal cation serves as cofactor.

The protein localises to the cell membrane. In Salmonella typhi, this protein is Putative epimerase LsrE (lsrE).